Reading from the N-terminus, the 516-residue chain is Flavonoid 3',5'-hydroxylase (516 aa).

C453 contacts heme.

The protein belongs to the cytochrome P450 family. It depends on heme as a cofactor.

The enzyme catalyses a 3',5'-unsubstituted flavanone + 2 reduced [NADPH--hemoprotein reductase] + 2 O2 = a 3',5'-dihydroxyflavanone + 2 oxidized [NADPH--hemoprotein reductase] + 2 H2O + 2 H(+). It functions in the pathway pigment biosynthesis; anthocyanin biosynthesis. Catalyzes the 3'5'-hydroxylation of naringenin and eriodictyol to form 5,7,3,'4',5'-pentahydroxyflavanone and 3',5'-hydroxylation of dihydrokaempferol and dihydroquercetin to form dihydromyricetin. The polypeptide is Flavonoid 3',5'-hydroxylase (CYP75A4) (Gentiana triflora (Clustered gentian)).